A 402-amino-acid polypeptide reads, in one-letter code: CCA-adding enzyme (402 aa).

Residues Gly32 and Arg35 each contribute to the ATP site. Residues Gly32 and Arg35 each coordinate CTP. Residues Asp45 and Asp47 each coordinate Mg(2+). 5 residues coordinate ATP: Arg116, Asp159, Arg162, Arg165, and Arg168. The CTP site is built by Arg116, Asp159, Arg162, Arg165, and Arg168.

Belongs to the tRNA nucleotidyltransferase/poly(A) polymerase family. Bacterial CCA-adding enzyme type 3 subfamily. In terms of assembly, homodimer. Mg(2+) serves as cofactor.

The enzyme catalyses a tRNA precursor + 2 CTP + ATP = a tRNA with a 3' CCA end + 3 diphosphate. The catalysed reaction is a tRNA with a 3' CCA end + 2 CTP + ATP = a tRNA with a 3' CCACCA end + 3 diphosphate. In terms of biological role, catalyzes the addition and repair of the essential 3'-terminal CCA sequence in tRNAs without using a nucleic acid template. Adds these three nucleotides in the order of C, C, and A to the tRNA nucleotide-73, using CTP and ATP as substrates and producing inorganic pyrophosphate. tRNA 3'-terminal CCA addition is required both for tRNA processing and repair. Also involved in tRNA surveillance by mediating tandem CCA addition to generate a CCACCA at the 3' terminus of unstable tRNAs. While stable tRNAs receive only 3'-terminal CCA, unstable tRNAs are marked with CCACCA and rapidly degraded. This chain is CCA-adding enzyme, found in Streptococcus pyogenes serotype M2 (strain MGAS10270).